Here is a 146-residue protein sequence, read N- to C-terminus: Snaclec coagulation factor IX/factor X-binding protein subunit B2 (146 aa).

The signal sequence occupies residues 1 to 23; sequence MGRLIFVSFGLLVVFLSLSGTAA. Cystine bridges form between Cys-25–Cys-36, Cys-53–Cys-142, and Cys-119–Cys-134. The C-type lectin domain occupies 32–143; the sequence is YEGHCYKPFN…CRMMANFVCE (112 aa).

Belongs to the snaclec family. In terms of assembly, heterodimer of subunits A and B2; disulfide-linked. Expressed by the venom gland.

The protein resides in the secreted. In terms of biological role, anticoagulant protein which binds to the gamma-carboxyglutamic acid-domain regions of factors IX (F9) and factor X (F10) in the presence of calcium with a 1 to 1 stoichiometry. This chain is Snaclec coagulation factor IX/factor X-binding protein subunit B2, found in Trimeresurus stejnegeri (Chinese green tree viper).